The primary structure comprises 297 residues: XIAP-associated factor 1 (297 aa).

A TRAF-type zinc finger spans residues 22–99 (LHEAHCLMYL…QLAVRLNKVD (78 aa)). Positions 178–255 (AVTPSPVGKP…NGKLRASSPV (78 aa)) are disordered. A compositionally biased stretch (basic and acidic residues) spans 202-212 (QTSKAEKDVRP). Positions 229–245 (RQAPRGTNKTTNLSLKS) are enriched in polar residues.

As to quaternary structure, interacts with BIRC1, BIRC2, BIRC3, BIRC4, BIRC7 and BIRC8. Part of an complex consisting of BIRC4, XAF1 and BIRC5; the complex formation requires IFN-beta stimulation. Interacts with RNF114, the interaction increases XAF1 stability and proapoptotic effects, and may regulate IFN signaling.

The protein resides in the cytoplasm. The protein localises to the nucleus. It is found in the mitochondrion. Functionally, seems to function as a negative regulator of members of the IAP (inhibitor of apoptosis protein) family. Inhibits anti-caspase activity of BIRC4. Induces cleavage and inactivation of BIRC4 independent of caspase activation. Mediates TNF-alpha-induced apoptosis and is involved in apoptosis in trophoblast cells. May inhibit BIRC4 indirectly by activating the mitochondrial apoptosis pathway. After translocation to mitochondria, promotes translocation of BAX to mitochondria and cytochrome c release from mitochondria. Seems to promote the redistribution of BIRC4 from the cytoplasm to the nucleus, probably independent of BIRC4 inactivation which seems to occur in the cytoplasm. The BIRC4-XAF1 complex mediates down-regulation of BIRC5/survivin; the process requires the E3 ligase activity of BIRC4. Seems to be involved in cellular sensitivity to the proapoptotic actions of TRAIL. May be a tumor suppressor by mediating apoptosis resistance of cancer cells. The sequence is that of XIAP-associated factor 1 (XAF1) from Bos taurus (Bovine).